A 432-amino-acid chain; its full sequence is Adenosylhomocysteinase (432 aa).

Serine 2 is modified (N-acetylserine). Residues threonine 57, aspartate 131, and glutamate 156 each contribute to the substrate site. Serine 183 is modified (phosphoserine). Positions 183 to 350 (SVTKSKFDNL…EGRLVNLGCA (168 aa)) are NAD binding. Substrate contacts are provided by lysine 186 and aspartate 190. Lysine 186 carries the post-translational modification N6-(2-hydroxyisobutyryl)lysine. Tyrosine 193 bears the Phosphotyrosine mark.

It belongs to the adenosylhomocysteinase family. Homotetramer. Interaction with AHCYL1. NAD(+) is required as a cofactor.

It localises to the cytoplasm. Its subcellular location is the melanosome. The protein resides in the nucleus. The protein localises to the endoplasmic reticulum. It catalyses the reaction S-adenosyl-L-homocysteine + H2O = L-homocysteine + adenosine. Its pathway is amino-acid biosynthesis; L-homocysteine biosynthesis; L-homocysteine from S-adenosyl-L-homocysteine: step 1/1. In terms of biological role, catalyzes the hydrolysis of S-adenosyl-L-homocysteine to form adenosine and homocysteine. Binds copper ions. In Bos taurus (Bovine), this protein is Adenosylhomocysteinase (AHCY).